Consider the following 509-residue polypeptide: Maturase K (509 aa).

Belongs to the intron maturase 2 family. MatK subfamily.

It is found in the plastid. The protein localises to the chloroplast. Usually encoded in the trnK tRNA gene intron. Probably assists in splicing its own and other chloroplast group II introns. The polypeptide is Maturase K (Nicotiana alata (Winged tobacco)).